Here is a 581-residue protein sequence, read N- to C-terminus: Rhodanese-like domain-containing protein 6 (581 aa).

Positions 158–258 constitute a Rhodanese domain; sequence ENKELVLLDA…YLEQFPSGGF (101 aa). Cysteine 216 serves as the catalytic Cysteine persulfide intermediate.

This Arabidopsis thaliana (Mouse-ear cress) protein is Rhodanese-like domain-containing protein 6 (STR6).